The primary structure comprises 331 residues: Putative heat stress transcription factor A-6a (331 aa).

Residues 135–160 form a disordered region; sequence RRGAGTGSTTPRAVNCGGGGGEGEVE. The stretch at 156 to 238 forms a coiled coil; it reads EGEVERLRRD…VERKKRRMLA (83 aa). The interval 162 to 212 is hydrophobic repeat HR-A/B; sequence LRRDKEALARELARLRRQQQEARAQLLDMERRVRGTERRQEQCTEFLARAL. Positions 230-235 match the Nuclear localization signal motif; it reads ERKKRR. A Nuclear export signal motif is present at residues 246–253; sequence LTFEALAL. The AHA1 motif lies at 270–279; the sequence is DMIWYELLGE. The AHA2 motif lies at 305–313; sequence AEPWEEMGE.

It belongs to the HSF family. Class A subfamily. As to quaternary structure, homotrimer. Exhibits temperature-dependent phosphorylation.

Its subcellular location is the cytoplasm. It is found in the nucleus. Transcriptional regulator that specifically binds DNA of heat shock promoter elements (HSE). The chain is Putative heat stress transcription factor A-6a (HSFA6A) from Oryza sativa subsp. japonica (Rice).